The chain runs to 261 residues: Carbonic anhydrase 1 (261 aa).

Residue Ala2 is modified to N-acetylalanine. Residues Pro4–Phe261 enclose the Alpha-carbonic anhydrase domain. A disordered region spans residues Pro22–Arg41. The active-site Proton donor/acceptor is His65. Residues His95, His97, and His120 each coordinate Zn(2+). Substrate-binding positions include Thr200 and Thr200–His201.

It belongs to the alpha-carbonic anhydrase family. Requires Zn(2+) as cofactor.

It localises to the cytoplasm. The enzyme catalyses hydrogencarbonate + H(+) = CO2 + H2O. It catalyses the reaction urea = cyanamide + H2O. With respect to regulation, inhibited by acetazolamide. Catalyzes the reversible hydration of carbon dioxide. Can hydrate cyanamide to urea. This is Carbonic anhydrase 1 (CA1) from Ovis aries (Sheep).